The following is a 417-amino-acid chain: MGQSSSKPDAKAHNMASSLTEFFKNFKMESKIISKETIDSIQSCIQEGDIQKVISIINAALTDIEKAPLNIAVTGETGAGKSTFINALRGIGHEESESAESGAVETTKDRKKYTHPKFPNVTIWDLPGVGTTNFKPEEYLKKMKFQEYDFFLIISSARFRDNEAQLAEAIKKMKKKFYFVRTKIDSDLWNEKKAKPSSYNREKILEVIRSDCVKNLQNANAASTRVFLVSSFEVAQFDFPSLESTLLEELPAHKRHIFVQCLPTITEPAIDRRRDVLKQTIWLEALKAGASATIPMMSFFNDDIEEFEKILSHYRACFGLDDESLENMAKEWSMSVEELESTIKSPHLLSSEPNESVADKLVKTMEKIFAVTGGFVATGLYFRKSYYMQNYFLDTVTEDAKVLLKKKVFLQDSVDSE.

Residue Gly-2 is the site of N-myristoyl glycine attachment. The region spanning 67-249 is the IRG-type G domain; the sequence is APLNIAVTGE…PSLESTLLEE (183 aa). Gly-78, Ala-79, Ser-82, Thr-83, Ser-101, Lys-183, Asp-185, and Ser-231 together coordinate GDP. 2 consecutive transmembrane segments (helical) span residues 284–302 and 370–387; these read EALKAGASATIPMMSFFND and AVTGGFVATGLYFRKSYY.

The protein belongs to the TRAFAC class dynamin-like GTPase superfamily. GB1/RHD3 GTPase family. GB1 subfamily. As to quaternary structure, homooligomer; homooligomerization occurs upon GTP-binding and is required for the association with membranous structures. Homodimer; GDP-binding induces formation of an inactive head-to-head homodimer. Myristoylation is required for localization to pathogen-containing vacuoles. Post-translationally, (Microbial infection) Phosphorylated by Toxoplasma gondii ROP18.

Its subcellular location is the membrane. The protein resides in the cytoplasmic vesicle membrane. It carries out the reaction GTP + H2O = GDP + phosphate + H(+). In terms of biological role, interferon (IFN)-inducible GTPase that plays important roles in innate immunity against a diverse range of bacterial, viral and protozoan pathogens by mediating cytosolic release of pathogenic ligands that activate the inflammasomes. Following infection, recruited to the membrane of pathogens in a GBP-dependent manner and mediates disruption of the pathogen membrane, liberating ligands that are detected by inflammasomes, such as lipopolysaccharide (LPS) that activates the non-canonical CASP4/CASP11 inflammasome or double-stranded DNA (dsDNA) that activates the AIM2 inflammasome. Promotes AIM2 and NLRP3 inflammasome activation following A.fumigatus infection by liberating beta-glucan, which directly triggers inflammasome assembly. Promotes NLRP3 inflammasome activation following influenza A virus infection. The sequence is that of Interferon-gamma-inducible GTPase 10 from Mus musculus (Mouse).